The sequence spans 129 residues: MKKSGILNRHLAGAIAELGHGDTVLVCDAGMPIPPGPRVIDLAFRAGTPSFAEVLDGLLDELVVEGATAAEEIRDANPDAAALLDVHFPWLEAVPHDELKARTAAARLVVRTGEARPYANVLLRCGVFF.

His20 functions as the Proton donor in the catalytic mechanism. Substrate-binding positions include Asp28, His96, and 118–120 (YAN).

This sequence belongs to the RbsD / FucU family. RbsD subfamily. Homodecamer.

Its subcellular location is the cytoplasm. The catalysed reaction is beta-D-ribopyranose = beta-D-ribofuranose. The protein operates within carbohydrate metabolism; D-ribose degradation; D-ribose 5-phosphate from beta-D-ribopyranose: step 1/2. In terms of biological role, catalyzes the interconversion of beta-pyran and beta-furan forms of D-ribose. The chain is D-ribose pyranase 2 from Streptomyces griseus subsp. griseus (strain JCM 4626 / CBS 651.72 / NBRC 13350 / KCC S-0626 / ISP 5235).